Here is a 357-residue protein sequence, read N- to C-terminus: Alanine racemase (357 aa).

Lys-35 acts as the Proton acceptor; specific for D-alanine in catalysis. At Lys-35 the chain carries N6-(pyridoxal phosphate)lysine. Arg-131 contacts substrate. Residue Tyr-256 is the Proton acceptor; specific for L-alanine of the active site. Residue Met-304 coordinates substrate.

Belongs to the alanine racemase family. Requires pyridoxal 5'-phosphate as cofactor.

The catalysed reaction is L-alanine = D-alanine. Its pathway is amino-acid biosynthesis; D-alanine biosynthesis; D-alanine from L-alanine: step 1/1. Its function is as follows. Catalyzes the interconversion of L-alanine and D-alanine. May also act on other amino acids. The protein is Alanine racemase (alr) of Legionella pneumophila (strain Corby).